Here is a 298-residue protein sequence, read N- to C-terminus: Probable endonuclease LCL3 (298 aa).

Residues 1–24 (MRWPWSGHDEEKKRNAATRSKRAE) are disordered. Residues 39-56 (LVPSVALTVSTVLGLRLY) traverse the membrane as a helical segment. Positions 77 to 262 (RTLFGQVTSV…KESRAGMWAK (186 aa)) constitute a TNase-like domain. Arg153 is an active-site residue. Asp158 is a Ca(2+) binding site. Active-site residues include Glu161 and Arg201. A disordered region spans residues 269–298 (LGGAGTKAPESPREYKSRHTAAEKQKKAAW). The segment covering 278 to 298 (ESPREYKSRHTAAEKQKKAAW) has biased composition (basic and acidic residues).

The protein belongs to the LCL3 family.

It is found in the mitochondrion. It localises to the membrane. The sequence is that of Probable endonuclease LCL3 (LCL3) from Leptosphaeria maculans (strain JN3 / isolate v23.1.3 / race Av1-4-5-6-7-8) (Blackleg fungus).